The following is a 507-amino-acid chain: Aromatase (507 aa).

Cysteine 436 is a binding site for heme.

Belongs to the cytochrome P450 family. Heme serves as cofactor.

It is found in the membrane. It catalyses the reaction testosterone + 3 reduced [NADPH--hemoprotein reductase] + 3 O2 = 17beta-estradiol + formate + 3 oxidized [NADPH--hemoprotein reductase] + 4 H2O + 4 H(+). The catalysed reaction is androst-4-ene-3,17-dione + 3 reduced [NADPH--hemoprotein reductase] + 3 O2 = estrone + formate + 3 oxidized [NADPH--hemoprotein reductase] + 4 H2O + 4 H(+). Catalyzes the formation of aromatic C18 estrogens from C19 androgens. This chain is Aromatase (CYP19A1), found in Gallus gallus (Chicken).